The sequence spans 250 residues: Acyl-coenzyme A diphosphatase fit1 (250 aa).

Topologically, residues Met1–Asp23 are cytoplasmic. A helical membrane pass occupies residues Ile24 to Val44. At Asp45–Asn58 the chain is on the lumenal side. A helical transmembrane segment spans residues Leu59–His79. At Ala80–Arg95 the chain is on the cytoplasmic side. A helical transmembrane segment spans residues Tyr96 to Ile116. The Lumenal segment spans residues Asp117 to Gly160. An N-linked (GlcNAc...) asparagine glycan is attached at Asn149. The active site involves His161. A helical membrane pass occupies residues His161–Leu181. At Asn182–Lys191 the chain is on the cytoplasmic side. Residues Val192 to His212 form a helical membrane-spanning segment. Residue His212 is part of the active site. A topological domain (lumenal) is located at residue Thr213. The chain crosses the membrane as a helical span at residues Thr214 to Phe234. Residues Ser235 to Tyr250 lie on the Cytoplasmic side of the membrane.

The protein belongs to the FIT family. Fungal FIT2B/SCS3 subfamily.

It is found in the endoplasmic reticulum membrane. The catalysed reaction is an acyl-CoA + H2O = an acyl-4'-phosphopantetheine + adenosine 3',5'-bisphosphate + 2 H(+). The enzyme catalyses (9Z)-octadecenoyl-CoA + H2O = S-(9Z-octadecenoyl)-4'-phosphopantetheine + adenosine 3',5'-bisphosphate + 2 H(+). It catalyses the reaction (5Z,8Z,11Z,14Z)-eicosatetraenoyl-CoA + H2O = S-(5Z,8Z,11Z,14Z-eicosatetraenoyl)-4'-phosphopantetheine + adenosine 3',5'-bisphosphate + 2 H(+). It carries out the reaction hexadecanoyl-CoA + H2O = S-hexadecanoyl-4'-phosphopantetheine + adenosine 3',5'-bisphosphate + 2 H(+). Its function is as follows. Fatty acyl-coenzyme A (CoA) diphosphatase that hydrolyzes fatty acyl-CoA to yield acyl-4'-phosphopantetheine and adenosine 3',5'-bisphosphate. Preferentially hydrolyzes unsaturated long-chain acyl-CoA substrates in the endoplasmic reticulum (ER) lumen. This catalytic activity is required for maintaining ER structure and for lipid droplets (LDs) biogenesis, which are lipid storage organelles involved in maintaining lipid and energy homeostasis. May directly bind to diacylglycerol (DAGs) and triacylglycerol, which is also important for LD biogenesis. May support directional budding of nacent LDs from the ER into the cytosol by reducing DAG levels at sites of LD formation. May play a role in the regulation of cell morphology and cytoskeletal organization. In Schizosaccharomyces pombe (strain 972 / ATCC 24843) (Fission yeast), this protein is Acyl-coenzyme A diphosphatase fit1.